A 35-amino-acid chain; its full sequence is Antimicrobial peptide 3 (35 aa).

One can recognise a Chitin-binding type-1 domain in the interval 4–35 (GGECGGRFGGCAGGQCCSRFGFCGSGPKYCAH). Cystine bridges form between Cys7–Cys20, Cys14–Cys26, and Cys19–Cys33.

Contains 3 disulfide bonds. In terms of tissue distribution, expressed in leaf, flower, stem and seed with highest expression in leaf (at protein level).

Its function is as follows. Has antifungal activity against A.niger (IC(50)=5.4 uM), B.sorokiniana (IC(50)=2.0 uM), B.cinerea (IC(50)=1.6 uM), F.solani (IC(50)=3.7 uM) and A.alternata (IC(50)=5.0 uM). Binds chitin in vitro. Has no antibacterial activity at concentrations up to 10 uM. The polypeptide is Antimicrobial peptide 3 (Stellaria media (Common chickweed)).